Reading from the N-terminus, the 142-residue chain is Immunoglobulin iota chain (142 aa).

The signal sequence occupies residues 1–19 (MAWTSVLLMLLAYLTGCGP). The interval 20–41 (QPMVHQPPLASSSLGATIRLSC) is framework-1. A disulfide bond links Cys-41 and Cys-115. Residues 42–56 (TLSNDHNIGIYSIYW) form a complementarity-determining-1 region. Residues 57 to 70 (YQQRPGHPPRFLLR) form a framework-2 region. Positions 71–81 (YFSHSDKHQGP) are complementarity-determining-2. Positions 82 to 115 (DIPPRFSGSKDTTRNLGYLSISELQPEDEAVYYC) are framework-3.

The protein belongs to the immunoglobulin superfamily. As to quaternary structure, interacts with IGLL1. Interacts with SYNV1/HRD1 (via N-terminus); this interaction leads to increased VPREB1A ubiquitination and degradation in pre-B cells, possibly through a lysosomal, not proteasomal, pathway. Only expressed by pre-B-cells.

Its subcellular location is the endoplasmic reticulum. In terms of biological role, associates with the Ig-mu chain to form a molecular complex that is expressed on the surface of pre-B-cells. This complex presumably regulates Ig gene rearrangements in the early steps of B-cell differentiation. The protein is Immunoglobulin iota chain of Mus musculus (Mouse).